The sequence spans 252 residues: Ribosomal RNA small subunit methyltransferase J (252 aa).

Residues 105 to 106 (RD), 121 to 122 (ER), and D175 each bind S-adenosyl-L-methionine.

The protein belongs to the methyltransferase superfamily. RsmJ family.

Its subcellular location is the cytoplasm. The enzyme catalyses guanosine(1516) in 16S rRNA + S-adenosyl-L-methionine = N(2)-methylguanosine(1516) in 16S rRNA + S-adenosyl-L-homocysteine + H(+). Its function is as follows. Specifically methylates the guanosine in position 1516 of 16S rRNA. This chain is Ribosomal RNA small subunit methyltransferase J, found in Pasteurella multocida (strain Pm70).